The primary structure comprises 257 residues: S-methyl-5'-thioadenosine phosphorylase (257 aa).

Residues serine 10 and 50–51 each bind phosphate; that span reads RH. Position 180 (methionine 180) interacts with substrate. Threonine 181 contacts phosphate. Position 204–206 (204–206) interacts with substrate; sequence DYD.

Belongs to the PNP/MTAP phosphorylase family. MTAP subfamily. As to quaternary structure, homohexamer. Dimer of a homotrimer.

It catalyses the reaction S-methyl-5'-thioadenosine + phosphate = 5-(methylsulfanyl)-alpha-D-ribose 1-phosphate + adenine. The protein operates within amino-acid biosynthesis; L-methionine biosynthesis via salvage pathway; S-methyl-5-thio-alpha-D-ribose 1-phosphate from S-methyl-5'-thioadenosine (phosphorylase route): step 1/1. In terms of biological role, catalyzes the reversible phosphorylation of S-methyl-5'-thioadenosine (MTA) to adenine and 5-methylthioribose-1-phosphate. Involved in the breakdown of MTA, a major by-product of polyamine biosynthesis. Responsible for the first step in the methionine salvage pathway after MTA has been generated from S-adenosylmethionine. Has broad substrate specificity with 6-aminopurine nucleosides as preferred substrates. The protein is S-methyl-5'-thioadenosine phosphorylase of Pyrococcus horikoshii (strain ATCC 700860 / DSM 12428 / JCM 9974 / NBRC 100139 / OT-3).